Here is a 350-residue protein sequence, read N- to C-terminus: RNA 3'-terminal phosphate cyclase (350 aa).

Residues glutamine 100 and 290-294 (FLGDQ) each bind ATP. The active-site Tele-AMP-histidine intermediate is histidine 314.

This sequence belongs to the RNA 3'-terminal cyclase family. Type 1 subfamily.

The protein localises to the cytoplasm. The catalysed reaction is a 3'-end 3'-phospho-ribonucleotide-RNA + ATP = a 3'-end 2',3'-cyclophospho-ribonucleotide-RNA + AMP + diphosphate. Its function is as follows. Catalyzes the conversion of 3'-phosphate to a 2',3'-cyclic phosphodiester at the end of RNA. The mechanism of action of the enzyme occurs in 3 steps: (A) adenylation of the enzyme by ATP; (B) transfer of adenylate to an RNA-N3'P to produce RNA-N3'PP5'A; (C) and attack of the adjacent 2'-hydroxyl on the 3'-phosphorus in the diester linkage to produce the cyclic end product. The biological role of this enzyme is unknown but it is likely to function in some aspects of cellular RNA processing. This chain is RNA 3'-terminal phosphate cyclase, found in Thermococcus sibiricus (strain DSM 12597 / MM 739).